The chain runs to 763 residues: Ras and Rab interactor 1 (763 aa).

N-acetylmethionine is present on methionine 1. A disordered region spans residues 1-52 (MEDPGETGAHPLGATNLNFVPGHQQKEKPSTDPLYDTPDTRGVQAGGSQQPA). Position 35 is a phosphotyrosine; by ABL1 and ABL2 (tyrosine 35). Residues 68–151 (WLQLRANAAA…QLICGYCRTR (84 aa)) enclose the SH2 domain. 3 disordered regions span residues 177-200 (LNTK…RSPQ), 238-273 (STET…PPRQ), and 301-331 (QEVD…RPRH). Serine 198, serine 246, serine 319, and serine 323 each carry phosphoserine. Positions 245 to 257 (LSPPAVPPPPVPV) are enriched in pro residues. Positions 316-326 (SSGSPTTSPRL) are enriched in low complexity. The residue at position 340 (serine 340) is a Phosphoserine; by PKD/PRKD1. Residues 445-587 (LSADGSLGRL…LSGLSQARAL (143 aa)) enclose the VPS9 domain. Residue serine 598 is modified to Phosphoserine. Positions 613 to 695 (FQHLLRVAYQ…GYLIYRRAER (83 aa)) constitute a Ras-associating domain. Omega-N-methylarginine is present on arginine 681. Residues 698-763 (TQGAVAEKAK…KAEGSQALEE (66 aa)) are disordered. Positions 727 to 755 (REGKPRIAVDQEGKDQARGGHIGPEEQKA) are enriched in basic and acidic residues.

This sequence belongs to the RIN (Ras interaction/interference) family. In terms of assembly, interacts with the GTP-bound form of Ras proteins (NRAS, HRAS and KRAS). This interaction prevents the association between RAF1 and Ras. Interacts with 14-3-3 proteins YWHAB, YWHAE and YWHAZ when phosphorylated on Ser-340. Interacts with the SH3 domain of ABL1 and ABL2. Interacts with RAB5A. The interaction with Ras is probably regulated and antagonized by the interaction with 14-3-3 proteins. The interaction with 14-3-3 proteins is regulated by phosphorylation on Ser-340. In terms of processing, phosphorylated on tyrosine residues by ABL1 and ABL2. Phosphorylation at Ser-340 by PRKD1 induces interaction with 14-3-3 proteins. Highly expressed in brain. Weakly or no expressed in other tissues, except in testis, where it is expressed at intermediate level. In brain, it is mainly expressed in postnatal forebrain neurons in which it is localized in dendrites and colocalizes with Ras.

It localises to the cytoplasm. Its subcellular location is the membrane. It is found in the cytoskeleton. Functionally, ras effector protein, which may serve as an inhibitory modulator of neuronal plasticity in aversive memory formation. Can affect Ras signaling at different levels. First, by competing with RAF1 protein for binding to activated Ras. Second, by enhancing signaling from ABL1 and ABL2, which regulate cytoskeletal remodeling. Third, by activating RAB5A, possibly by functioning as a guanine nucleotide exchange factor (GEF) for RAB5A, by exchanging bound GDP for free GTP, and facilitating Ras-activated receptor endocytosis. This chain is Ras and Rab interactor 1 (Rin1), found in Mus musculus (Mouse).